Reading from the N-terminus, the 463-residue chain is L-seryl-tRNA(Sec) selenium transferase (463 aa).

At Lys-295 the chain carries N6-(pyridoxal phosphate)lysine.

It belongs to the SelA family. In terms of assembly, homodecamer; pentamer of dimers. Binds only one seryl-tRNA(Sec) per dimer. Pyridoxal 5'-phosphate is required as a cofactor.

The protein resides in the cytoplasm. The enzyme catalyses L-seryl-tRNA(Sec) + selenophosphate + H(+) = L-selenocysteinyl-tRNA(Sec) + phosphate. It participates in aminoacyl-tRNA biosynthesis; selenocysteinyl-tRNA(Sec) biosynthesis; selenocysteinyl-tRNA(Sec) from L-seryl-tRNA(Sec) (bacterial route): step 1/1. In terms of biological role, converts seryl-tRNA(Sec) to selenocysteinyl-tRNA(Sec) required for selenoprotein biosynthesis. This chain is L-seryl-tRNA(Sec) selenium transferase, found in Photorhabdus laumondii subsp. laumondii (strain DSM 15139 / CIP 105565 / TT01) (Photorhabdus luminescens subsp. laumondii).